We begin with the raw amino-acid sequence, 203 residues long: Histone deacetylase HDT4 (203 aa).

Residues 2-5 (EFWG) are required to repress transcription. Residues 121 to 203 (AALPQNEINP…PFPCGPSCKK (83 aa)) form a disordered region. Residues 129 to 157 (NPEEDDESDSDEMGLDEDDDSSDEEDVEA) show a composition bias toward acidic residues. A compositionally biased stretch (basic residues) spans 180–193 (GGKKNKSSGGKKRC).

It belongs to the histone deacetylase HD2 family. In terms of tissue distribution, confined to stems and flowers with young siliques.

The protein resides in the nucleus. It localises to the nucleolus. Probably mediates the deacetylation of lysine residues lysine residues on the N-terminal part of the core histones (H2A, H2B, H3 and H4). Histone deacetylation gives a tag for epigenetic repression and plays an important role in transcriptional regulation, cell cycle progression and developmental events. The chain is Histone deacetylase HDT4 (HDT4) from Arabidopsis thaliana (Mouse-ear cress).